The chain runs to 350 residues: tRNA uridine(34) hydroxylase (350 aa).

In terms of domain architecture, Rhodanese spans 146-240 (DDPDAVFIDM…YARRAREQGL (95 aa)). Residue Cys200 is the Cysteine persulfide intermediate of the active site. Residues 319–328 (RRRRAGRENG) are compositionally biased toward basic and acidic residues. The disordered stretch occupies residues 319–350 (RRRRAGRENGNKIFNKSRGRLNSKLSIPDPAE).

It belongs to the TrhO family.

The catalysed reaction is uridine(34) in tRNA + AH2 + O2 = 5-hydroxyuridine(34) in tRNA + A + H2O. Catalyzes oxygen-dependent 5-hydroxyuridine (ho5U) modification at position 34 in tRNAs. This Salmonella schwarzengrund (strain CVM19633) protein is tRNA uridine(34) hydroxylase.